The sequence spans 353 residues: Photosystem II D2 protein (353 aa).

Thr-2 is modified (N-acetylthreonine). Thr-2 bears the Phosphothreonine mark. The chain crosses the membrane as a helical span at residues 41–61 (CAYFAVGGWFTGTTFVTSWYT). His-118 lines the chlorophyll a pocket. A helical membrane pass occupies residues 125–141 (GFMLRQFELARSVQLRP). Pheophytin a contacts are provided by Gln-130 and Asn-143. The helical transmembrane segment at 153–166 (VFVSVFLIYPLGQS) threads the bilayer. His-198 lines the chlorophyll a pocket. A helical transmembrane segment spans residues 208–228 (AALLCAIHGATVENTLFEDGD). A plastoquinone contacts are provided by His-215 and Phe-262. Position 215 (His-215) interacts with Fe cation. His-269 contributes to the Fe cation binding site. A helical transmembrane segment spans residues 279–295 (GLWMSALGVVGLALNLR).

The protein belongs to the reaction center PufL/M/PsbA/D family. In terms of assembly, PSII is composed of 1 copy each of membrane proteins PsbA, PsbB, PsbC, PsbD, PsbE, PsbF, PsbH, PsbI, PsbJ, PsbK, PsbL, PsbM, PsbT, PsbX, PsbY, PsbZ, Psb30/Ycf12, at least 3 peripheral proteins of the oxygen-evolving complex and a large number of cofactors. It forms dimeric complexes. Requires The D1/D2 heterodimer binds P680, chlorophylls that are the primary electron donor of PSII, and subsequent electron acceptors. It shares a non-heme iron and each subunit binds pheophytin, quinone, additional chlorophylls, carotenoids and lipids. There is also a Cl(-1) ion associated with D1 and D2, which is required for oxygen evolution. The PSII complex binds additional chlorophylls, carotenoids and specific lipids. as cofactor.

It is found in the plastid. It localises to the chloroplast thylakoid membrane. The enzyme catalyses 2 a plastoquinone + 4 hnu + 2 H2O = 2 a plastoquinol + O2. In terms of biological role, photosystem II (PSII) is a light-driven water:plastoquinone oxidoreductase that uses light energy to abstract electrons from H(2)O, generating O(2) and a proton gradient subsequently used for ATP formation. It consists of a core antenna complex that captures photons, and an electron transfer chain that converts photonic excitation into a charge separation. The D1/D2 (PsbA/PsbD) reaction center heterodimer binds P680, the primary electron donor of PSII as well as several subsequent electron acceptors. D2 is needed for assembly of a stable PSII complex. This chain is Photosystem II D2 protein, found in Cicer arietinum (Chickpea).